The chain runs to 346 residues: uncharacterized protein (346 aa).

The helical transmembrane segment at Ala7–Val27 threads the bilayer. The tract at residues Glu29–Lys48 is disordered. Residues Ser35–Ala44 are compositionally biased toward polar residues. In terms of domain architecture, SCP spans Leu231–Phe342.

Its subcellular location is the cell membrane. This is an uncharacterized protein from Bacillus subtilis (strain 168).